A 228-amino-acid chain; its full sequence is 5'-methylthioadenosine/S-adenosylhomocysteine nucleosidase (228 aa).

The active-site Proton acceptor is the Glu-11. Residues Gly-77, Ile-151, and 172 to 173 (ME) each bind substrate. Asp-196 serves as the catalytic Proton donor.

This sequence belongs to the PNP/UDP phosphorylase family. MtnN subfamily.

It carries out the reaction S-adenosyl-L-homocysteine + H2O = S-(5-deoxy-D-ribos-5-yl)-L-homocysteine + adenine. The enzyme catalyses S-methyl-5'-thioadenosine + H2O = 5-(methylsulfanyl)-D-ribose + adenine. The catalysed reaction is 5'-deoxyadenosine + H2O = 5-deoxy-D-ribose + adenine. It participates in amino-acid biosynthesis; L-methionine biosynthesis via salvage pathway; S-methyl-5-thio-alpha-D-ribose 1-phosphate from S-methyl-5'-thioadenosine (hydrolase route): step 1/2. Functionally, catalyzes the irreversible cleavage of the glycosidic bond in both 5'-methylthioadenosine (MTA) and S-adenosylhomocysteine (SAH/AdoHcy) to adenine and the corresponding thioribose, 5'-methylthioribose and S-ribosylhomocysteine, respectively. Also cleaves 5'-deoxyadenosine, a toxic by-product of radical S-adenosylmethionine (SAM) enzymes, into 5-deoxyribose and adenine. The polypeptide is 5'-methylthioadenosine/S-adenosylhomocysteine nucleosidase (Staphylococcus carnosus (strain TM300)).